Here is a 173-residue protein sequence, read N- to C-terminus: Large ribosomal subunit protein uL10 (173 aa).

It belongs to the universal ribosomal protein uL10 family. As to quaternary structure, part of the ribosomal stalk of the 50S ribosomal subunit. The N-terminus interacts with L11 and the large rRNA to form the base of the stalk. The C-terminus forms an elongated spine to which L12 dimers bind in a sequential fashion forming a multimeric L10(L12)X complex.

In terms of biological role, forms part of the ribosomal stalk, playing a central role in the interaction of the ribosome with GTP-bound translation factors. The protein is Large ribosomal subunit protein uL10 of Cupriavidus necator (strain ATCC 17699 / DSM 428 / KCTC 22496 / NCIMB 10442 / H16 / Stanier 337) (Ralstonia eutropha).